Consider the following 328-residue polypeptide: Serine/threonine-protein phosphatase PP2A-2 catalytic subunit (328 aa).

Mn(2+)-binding residues include Asp76, His78, Asp104, and Asn136. His137 serves as the catalytic Proton donor. Mn(2+) is bound by residues His186 and His260. Leu328 carries the leucine methyl ester modification.

This sequence belongs to the PPP phosphatase family. PP-2A subfamily. Mn(2+) serves as cofactor.

The catalysed reaction is O-phospho-L-seryl-[protein] + H2O = L-seryl-[protein] + phosphate. It catalyses the reaction O-phospho-L-threonyl-[protein] + H2O = L-threonyl-[protein] + phosphate. The protein is Serine/threonine-protein phosphatase PP2A-2 catalytic subunit (PP2A-2) of Blumeria hordei (Barley powdery mildew).